The following is a 143-amino-acid chain: Small ribosomal subunit protein uS12B (143 aa).

At proline 62 the chain carries 3,4-dihydroxyproline.

Belongs to the universal ribosomal protein uS12 family. In terms of assembly, component of the small ribosomal subunit (SSU). Mature yeast ribosomes consist of a small (40S) and a large (60S) subunit. The 40S small subunit contains 1 molecule of ribosomal RNA (18S rRNA) and at least 33 different proteins. The large 60S subunit contains 3 rRNA molecules (25S, 5.8S and 5S rRNA) and at least 46 different proteins. In terms of processing, hydroxylation at Pro-62 affects translation termination efficiency.

It localises to the cytoplasm. The protein localises to the nucleus. Its subcellular location is the nucleolus. Functionally, component of the ribosome, a large ribonucleoprotein complex responsible for the synthesis of proteins in the cell. The small ribosomal subunit (SSU) binds messenger RNAs (mRNAs) and translates the encoded message by selecting cognate aminoacyl-transfer RNA (tRNA) molecules. The large subunit (LSU) contains the ribosomal catalytic site termed the peptidyl transferase center (PTC), which catalyzes the formation of peptide bonds, thereby polymerizing the amino acids delivered by tRNAs into a polypeptide chain. The nascent polypeptides leave the ribosome through a tunnel in the LSU and interact with protein factors that function in enzymatic processing, targeting, and the membrane insertion of nascent chains at the exit of the ribosomal tunnel. The chain is Small ribosomal subunit protein uS12B (rps2302) from Schizosaccharomyces pombe (strain 972 / ATCC 24843) (Fission yeast).